A 254-amino-acid polypeptide reads, in one-letter code: tRNA (guanine-N(1)-)-methyltransferase (254 aa).

S-adenosyl-L-methionine contacts are provided by residues Gly121 and 141-146 (LGDYVL).

Belongs to the RNA methyltransferase TrmD family. Homodimer.

Its subcellular location is the cytoplasm. The catalysed reaction is guanosine(37) in tRNA + S-adenosyl-L-methionine = N(1)-methylguanosine(37) in tRNA + S-adenosyl-L-homocysteine + H(+). In terms of biological role, specifically methylates guanosine-37 in various tRNAs. The chain is tRNA (guanine-N(1)-)-methyltransferase from Psychrobacter cryohalolentis (strain ATCC BAA-1226 / DSM 17306 / VKM B-2378 / K5).